The sequence spans 240 residues: Transcriptional regulatory protein ResD (240 aa).

In terms of domain architecture, Response regulatory spans 8–121 (KILVVDDEAR…EVVLRVKALL (114 aa)). The residue at position 57 (Asp57) is a 4-aspartylphosphate. The ompR/PhoB-type DNA-binding region spans 137–237 (KNVLVFSHLS…VWGVGYKFEV (101 aa)).

As to quaternary structure, interacts with the RNA polymerase core. In terms of processing, phosphorylated by ResE.

It localises to the cytoplasm. Functionally, member of the two-component regulatory system ResD/ResE. Required for the expression of resA, ctaA, qcrABC and fnr; activation role in global regulation of aerobic and anaerobic respiration. The chain is Transcriptional regulatory protein ResD (resD) from Bacillus subtilis (strain 168).